A 327-amino-acid chain; its full sequence is uncharacterized protein (327 aa).

An N-terminal signal peptide occupies residues Met-1–Gly-24.

This is an uncharacterized protein from Salmonella typhimurium (strain LT2 / SGSC1412 / ATCC 700720).